We begin with the raw amino-acid sequence, 326 residues long: Metal-binding protein YtgA (326 aa).

The N-terminal stretch at 1-21 is a signal peptide; sequence MFFLHVRKYKHVIGGLLCLAG. Fe(2+)-binding residues include His75, His141, His207, and Asp299.

Belongs to the bacterial solute-binding protein 9 family. Monomer.

The protein resides in the periplasm. Its function is as follows. Part of the ATP-binding cassette (ABC) transport system YtgABCD involved in metal import. Binds Fe(2+), Mn(2+) and Ni(2+), with a preference for Fe(2+) and delivers them to the membrane permease for translocation into the cytoplasm. This is Metal-binding protein YtgA from Chlamydia muridarum (strain MoPn / Nigg).